A 254-amino-acid chain; its full sequence is Ribosomal RNA small subunit methyltransferase J (254 aa).

S-adenosyl-L-methionine-binding positions include 107-108 (RD), 123-124 (ER), and Asp-174.

This sequence belongs to the methyltransferase superfamily. RsmJ family.

It is found in the cytoplasm. The enzyme catalyses guanosine(1516) in 16S rRNA + S-adenosyl-L-methionine = N(2)-methylguanosine(1516) in 16S rRNA + S-adenosyl-L-homocysteine + H(+). In terms of biological role, specifically methylates the guanosine in position 1516 of 16S rRNA. This chain is Ribosomal RNA small subunit methyltransferase J, found in Coxiella burnetii (strain Dugway 5J108-111).